A 266-amino-acid polypeptide reads, in one-letter code: MDKEFKVLDKGFIRLVDYMGTDARIVQSARVSYGEGTKTVREDAALIDYLLRNKHTSPFEQVVFTFHVKLPIFVARQWIRHRTARLNEISGRYSILKAEFYVPAGKDIALQSSDNKQGRMNEAVPQDLQNEVITSLQKQQEEIYAGYSKLLDKNIARELARINLPLSTYTEWYWQIDLHNLFHFLRLRMDAHAQKEIRDYAEVMFEICKTVTPLACASFERHEKNGVNFSAEELEAIRNLIAGKDSGLKGKELERFNEKLKSGRQV.

A ThyX domain is found at 11-222; that stretch reads GFIRLVDYMG…PLACASFERH (212 aa). Residues Ser-57, 80-82, and Glu-88 each bind FAD; that span reads RHR. DUMP is bound by residues 77 to 80, 88 to 92, and Arg-161; these read QWIR and EISGR. The short motif at 80–90 is the ThyX motif element; that stretch reads RHRTARLNEIS. Residues 177–179 and His-183 each bind FAD; that span reads DLH. Arg-188 lines the dUMP pocket. Arg-188 serves as the catalytic Involved in ionization of N3 of dUMP, leading to its activation.

This sequence belongs to the thymidylate synthase ThyX family. As to quaternary structure, homotetramer. FAD is required as a cofactor.

The catalysed reaction is dUMP + (6R)-5,10-methylene-5,6,7,8-tetrahydrofolate + NADPH + H(+) = dTMP + (6S)-5,6,7,8-tetrahydrofolate + NADP(+). Its pathway is pyrimidine metabolism; dTTP biosynthesis. Functionally, catalyzes the reductive methylation of 2'-deoxyuridine-5'-monophosphate (dUMP) to 2'-deoxythymidine-5'-monophosphate (dTMP) while utilizing 5,10-methylenetetrahydrofolate (mTHF) as the methyl donor, and NADPH and FADH(2) as the reductant. The chain is Flavin-dependent thymidylate synthase from Treponema denticola (strain ATCC 35405 / DSM 14222 / CIP 103919 / JCM 8153 / KCTC 15104).